The chain runs to 114 residues: T cell receptor beta variable 3-1 (114 aa).

An N-terminal signal peptide occupies residues 1 to 21 (MGCRLLCCVVFCLLQAGPLDT). The Ig-like domain maps to 22–114 (AVSQTPKYLV…SAVYFCASSQ (93 aa)). Cys42 and Cys110 are disulfide-bonded. N-linked (GlcNAc...) asparagine glycosylation occurs at Asn76.

In terms of assembly, alpha-beta TR is a heterodimer composed of an alpha and beta chain; disulfide-linked. The alpha-beta TR is associated with the transmembrane signaling CD3 coreceptor proteins to form the TR-CD3 (TcR or TCR). The assembly of alpha-beta TR heterodimers with CD3 occurs in the endoplasmic reticulum where a single alpha-beta TR heterodimer associates with one CD3D-CD3E heterodimer, one CD3G-CD3E heterodimer and one CD247 homodimer forming a stable octameric structure. CD3D-CD3E and CD3G-CD3E heterodimers preferentially associate with TR alpha and TR beta chains, respectively. The association of the CD247 homodimer is the last step of TcR assembly in the endoplasmic reticulum and is required for transport to the cell surface.

Its subcellular location is the cell membrane. Functionally, v region of the variable domain of T cell receptor (TR) beta chain that participates in the antigen recognition. Alpha-beta T cell receptors are antigen specific receptors which are essential to the immune response and are present on the cell surface of T lymphocytes. Recognize peptide-major histocompatibility (MH) (pMH) complexes that are displayed by antigen presenting cells (APC), a prerequisite for efficient T cell adaptive immunity against pathogens. Binding of alpha-beta TR to pMH complex initiates TR-CD3 clustering on the cell surface and intracellular activation of LCK that phosphorylates the ITAM motifs of CD3G, CD3D, CD3E and CD247 enabling the recruitment of ZAP70. In turn ZAP70 phosphorylates LAT, which recruits numerous signaling molecules to form the LAT signalosome. The LAT signalosome propagates signal branching to three major signaling pathways, the calcium, the mitogen-activated protein kinase (MAPK) kinase and the nuclear factor NF-kappa-B (NF-kB) pathways, leading to the mobilization of transcription factors that are critical for gene expression and essential for T cell growth and differentiation. The T cell repertoire is generated in the thymus, by V-(D)-J rearrangement. This repertoire is then shaped by intrathymic selection events to generate a peripheral T cell pool of self-MH restricted, non-autoaggressive T cells. Post-thymic interaction of alpha-beta TR with the pMH complexes shapes TR structural and functional avidity. The polypeptide is T cell receptor beta variable 3-1 (Homo sapiens (Human)).